The following is a 151-amino-acid chain: Transcriptional repressor NrdR (151 aa).

Residues 3-34 (CPFCSSDNTRVIDSRPADDNSSIRRRRLCDDC) fold into a zinc finger. The ATP-cone domain occupies 49–139 (LIVIKKDNNR…VYREFKDVNT (91 aa)).

This sequence belongs to the NrdR family. Requires Zn(2+) as cofactor.

Functionally, negatively regulates transcription of bacterial ribonucleotide reductase nrd genes and operons by binding to NrdR-boxes. The sequence is that of Transcriptional repressor NrdR from Agathobacter rectalis (strain ATCC 33656 / DSM 3377 / JCM 17463 / KCTC 5835 / VPI 0990) (Eubacterium rectale).